Here is a 206-residue protein sequence, read N- to C-terminus: Outer-membrane lipoprotein LolB (206 aa).

The N-terminal stretch at 1–18 is a signal peptide; the sequence is MSLLKNLLAPCLALLLAG. Residue Cys-19 is the site of N-palmitoyl cysteine attachment. The S-diacylglycerol cysteine moiety is linked to residue Cys-19.

Belongs to the LolB family. Monomer.

The protein resides in the cell outer membrane. In terms of biological role, plays a critical role in the incorporation of lipoproteins in the outer membrane after they are released by the LolA protein. This is Outer-membrane lipoprotein LolB from Stutzerimonas stutzeri (strain A1501) (Pseudomonas stutzeri).